The chain runs to 319 residues: HPr kinase/phosphorylase (319 aa).

Catalysis depends on residues H137 and K158. Residue 152–159 (GDSGVGKS) coordinates ATP. Residue S159 coordinates Mg(2+). D176 serves as the catalytic Proton acceptor; for phosphorylation activity. Proton donor; for dephosphorylation activity. Residues 201–210 (MEIRGLGIIN) are important for the catalytic mechanism of both phosphorylation and dephosphorylation. A Mg(2+)-binding site is contributed by E202. Residue R243 is part of the active site. The segment at 264-269 (PVRPGR) is important for the catalytic mechanism of dephosphorylation.

The protein belongs to the HPrK/P family. In terms of assembly, homohexamer. Requires Mg(2+) as cofactor.

The catalysed reaction is [HPr protein]-L-serine + ATP = [HPr protein]-O-phospho-L-serine + ADP + H(+). It catalyses the reaction [HPr protein]-O-phospho-L-serine + phosphate + H(+) = [HPr protein]-L-serine + diphosphate. Functionally, catalyzes the ATP- as well as the pyrophosphate-dependent phosphorylation of a specific serine residue in HPr, a phosphocarrier protein of the phosphoenolpyruvate-dependent sugar phosphotransferase system (PTS). HprK/P also catalyzes the pyrophosphate-producing, inorganic phosphate-dependent dephosphorylation (phosphorolysis) of seryl-phosphorylated HPr (P-Ser-HPr). The chain is HPr kinase/phosphorylase from Treponema pallidum subsp. pallidum (strain SS14).